We begin with the raw amino-acid sequence, 466 residues long: Uronate isomerase (466 aa).

This sequence belongs to the metallo-dependent hydrolases superfamily. Uronate isomerase family.

The enzyme catalyses D-glucuronate = D-fructuronate. It catalyses the reaction aldehydo-D-galacturonate = keto-D-tagaturonate. It participates in carbohydrate metabolism; pentose and glucuronate interconversion. The sequence is that of Uronate isomerase from Clostridium perfringens (strain 13 / Type A).